Consider the following 460-residue polypeptide: Cation efflux system protein CusC (460 aa).

Positions 1–17 are cleaved as a signal peptide; it reads MSPCKLLPFCVALALTG. Cysteine 18 carries N-palmitoyl cysteine lipidation. A lipid anchor (S-diacylglycerol cysteine) is attached at cysteine 18.

Belongs to the outer membrane factor (OMF) (TC 1.B.17) family. Homotrimer. Component of the cus efflux system composed of CusA, CusB, CusC and CusF.

It is found in the cell outer membrane. Functionally, forms pores that allow passive diffusion of cations across the outer membrane. Part of a cation efflux system that mediates resistance to copper and silver. The sequence is that of Cation efflux system protein CusC (cusC) from Escherichia coli O6:H1 (strain CFT073 / ATCC 700928 / UPEC).